The primary structure comprises 467 residues: Bifunctional enzyme LpxC/FabZ (467 aa).

The UDP-3-O-acyl-N-acetylglucosamine deacetylase stretch occupies residues methionine 1–aspartate 306. The Zn(2+) site is built by histidine 79, histidine 264, and aspartate 268. The Proton donor role is filled by histidine 291. The interval arginine 307 to asparagine 467 is 3-hydroxyacyl-[acyl-carrier-protein] dehydratase. Residue histidine 370 is part of the active site.

The protein in the N-terminal section; belongs to the LpxC family. It in the C-terminal section; belongs to the thioester dehydratase family. Zn(2+) serves as cofactor.

The protein resides in the cytoplasm. It carries out the reaction a UDP-3-O-[(3R)-3-hydroxyacyl]-N-acetyl-alpha-D-glucosamine + H2O = a UDP-3-O-[(3R)-3-hydroxyacyl]-alpha-D-glucosamine + acetate. The enzyme catalyses a (3R)-hydroxyacyl-[ACP] = a (2E)-enoyl-[ACP] + H2O. The protein operates within glycolipid biosynthesis; lipid IV(A) biosynthesis; lipid IV(A) from (3R)-3-hydroxytetradecanoyl-[acyl-carrier-protein] and UDP-N-acetyl-alpha-D-glucosamine: step 2/6. Functionally, catalyzes the hydrolysis of UDP-3-O-myristoyl-N-acetylglucosamine to form UDP-3-O-myristoylglucosamine and acetate, the committed step in lipid A biosynthesis. Its function is as follows. Involved in unsaturated fatty acids biosynthesis. Catalyzes the dehydration of short chain beta-hydroxyacyl-ACPs and long chain saturated and unsaturated beta-hydroxyacyl-ACPs. The chain is Bifunctional enzyme LpxC/FabZ (lpxC/fabZ) from Chlorobaculum tepidum (strain ATCC 49652 / DSM 12025 / NBRC 103806 / TLS) (Chlorobium tepidum).